The sequence spans 351 residues: Protein-glutamate methylesterase/protein-glutamine glutaminase (351 aa).

The 118-residue stretch at 6 to 123 folds into the Response regulatory domain; sequence RVLVVDDSPT…ARPFGDLADK (118 aa). A 4-aspartylphosphate modification is found at Asp57. Residues 154-346 enclose the CheB-type methylesterase domain; that stretch reads YRAGRKVVAI…EEILKLTTAR (193 aa). Catalysis depends on residues Ser166, His192, and Asp288.

This sequence belongs to the CheB family. In terms of processing, phosphorylated by CheA. Phosphorylation of the N-terminal regulatory domain activates the methylesterase activity.

The protein resides in the cytoplasm. It catalyses the reaction [protein]-L-glutamate 5-O-methyl ester + H2O = L-glutamyl-[protein] + methanol + H(+). It carries out the reaction L-glutaminyl-[protein] + H2O = L-glutamyl-[protein] + NH4(+). In terms of biological role, involved in chemotaxis. Part of a chemotaxis signal transduction system that modulates chemotaxis in response to various stimuli. Catalyzes the demethylation of specific methylglutamate residues introduced into the chemoreceptors (methyl-accepting chemotaxis proteins or MCP) by CheR. Also mediates the irreversible deamidation of specific glutamine residues to glutamic acid. This Agrobacterium fabrum (strain C58 / ATCC 33970) (Agrobacterium tumefaciens (strain C58)) protein is Protein-glutamate methylesterase/protein-glutamine glutaminase.